The following is a 170-amino-acid chain: NADH-quinone oxidoreductase subunit B (170 aa).

Cys37, Cys38, Cys102, and Cys131 together coordinate [4Fe-4S] cluster.

It belongs to the complex I 20 kDa subunit family. As to quaternary structure, NDH-1 is composed of 14 different subunits. Subunits NuoB, C, D, E, F, and G constitute the peripheral sector of the complex. It depends on [4Fe-4S] cluster as a cofactor.

It localises to the cell inner membrane. It catalyses the reaction a quinone + NADH + 5 H(+)(in) = a quinol + NAD(+) + 4 H(+)(out). In terms of biological role, NDH-1 shuttles electrons from NADH, via FMN and iron-sulfur (Fe-S) centers, to quinones in the respiratory chain. The immediate electron acceptor for the enzyme in this species is believed to be ubiquinone. Couples the redox reaction to proton translocation (for every two electrons transferred, four hydrogen ions are translocated across the cytoplasmic membrane), and thus conserves the redox energy in a proton gradient. In Geotalea uraniireducens (strain Rf4) (Geobacter uraniireducens), this protein is NADH-quinone oxidoreductase subunit B.